The following is a 132-amino-acid chain: Small ribosomal subunit protein eS12 (132 aa).

It belongs to the eukaryotic ribosomal protein eS12 family.

The protein is Small ribosomal subunit protein eS12 (rps12) of Oreochromis niloticus (Nile tilapia).